Consider the following 254-residue polypeptide: Alcohol dehydrogenase (254 aa).

NAD(+) is bound at residue 10–33 (FVAGLGGIGLDTSREIVKSGPKNL). S138 lines the substrate pocket. Y151 acts as the Proton acceptor in catalysis.

It belongs to the short-chain dehydrogenases/reductases (SDR) family. As to quaternary structure, homodimer.

It carries out the reaction a primary alcohol + NAD(+) = an aldehyde + NADH + H(+). It catalyses the reaction a secondary alcohol + NAD(+) = a ketone + NADH + H(+). This chain is Alcohol dehydrogenase (Adh), found in Drosophila flavomontana (Fruit fly).